A 255-amino-acid chain; its full sequence is Probable transcriptional regulatory protein CMS0715 (255 aa).

It belongs to the TACO1 family.

It is found in the cytoplasm. The chain is Probable transcriptional regulatory protein CMS0715 from Clavibacter sepedonicus (Clavibacter michiganensis subsp. sepedonicus).